The primary structure comprises 1995 residues: MITFTFMSLVTSVKDYVEITHKLIEIEPLKNYTEFGAVFTYFIFSIGEFFKNFFSFSFLNNIWSIPIIIPDIASAMISEVSVLDGYFHNAFTFLETSVNTTTNPSLVIFEKFVIGIINSLFLILPTSTSHLITLRRFVMQGLEAGYMAGLGTLAGNFLWLASIILGWRFFVIPWLSLDIFRYLLGFVLLVKYIWDSSKERRMALEDLSKWKIFLLNFLLALTEQSCIYPFISNLSFGPDASILEGFPVDNYPQFLLIHGAYLLGILFGSFSLLQFTCWFWENPAFSIYLWITTKSSLKISTSSYYKILNFTFLYATMLCAIASIPYYGLDYTITNPIGLVPQDRILNQKKSQSDPDKLITETAFLNLNPTDKNSRIRDGVHARRERWKQRLIKYQAFDASTYDQGVYDFLTIEDLNYGFDRFWLRRKMRNHQIRFRLFPGPWMRSLKKQLNNPANPSLETSTKAASGPRVEFFRILFEQFYHPNFHDRAAMQTNPAEARNKFISTSPLASTESKKALNSTFSLGNINNSSTGIEGLVLTNTQATLLPTDLQTKRTIKPGLIYTNSALRKFVRNVNTRLNLKLLNSKETNLTTKYKSQFIYSKRWKSIFSKIQPLQNGTTRKSYQLFRNVAKQILVTPDAKSLKLITINQKLSLKERKLLELRTQYNNNSTLTTTAPLTLVRPLNVYLQKEEAFKRKLRYYGTMPMRKLTVGNQAPYFKALMKRGFYYYKPTLRWRKTLYVASLRRGFRKKSRKQRILVMPSNQQNFNNTLDNTKTNINQNNLANPLGGNEVPMYGADGENSLITKPTHSYTVLGKRASRYRHQIYKDVLQHWYYTPFNRLLMKFDVDAFINRQPKSHFLTKNEERALHIRRFLLSEHYDTLRWYTYMQHYKTMKTNIGGTKSFANRAYNQQFQGTFKKIRHLFAITPKQGDFYTLKFDQPLYNDNKLKDNLYFHEELLTDYYNGTNLQTNQTSNISVNSTTTFIDNSLRTTQLPVPSSSFDIVNQSSTLIGLTTMQNALRKNVVESTLTSLNSDGEAATSQPKLNFVYSELFVKLIKECKKRIHDQTFLKNYITHRIEKREQLNQEQTKELNKRLEKLKVWLNSDKGSISKLQNTPVQDPNISSPDKVLTTAMQKAVNESISLSGIMPSDKIKTTYGNLTNAYTIKTENAILTKLNVINQLTNNETTTQKNTLIKSIGVNKIQTVLQTIITNFKSSLYNQTQLLRVKTDKDLQWWRTKQRVITKRKSARKRDRFKKQIAVVNKKLAALSKKVETEKSNLYQTLYGNYEISDYLLRNVPTGSSAVIDSTVLRKKQDNQAYLPKETNNVQFNSFVDSNNNVWQTFFAKKLRKKISSKGRRYRSLSLARYLTATRKPRLVGLDNLTKIDNITTLQGAFITKEEKQDSLNLTIQRKQELTNSLKKSQIKKRSRHSWKKRSRHQFSRNHYKYRKRHTHGNGKLRVMNKKLKKFKATNELRQWWWNSFLPRYLSNLQVNNSTLTNKNVSFKPLSNTNSVPSTNMASPTTSRNLLDNLNSSNQISTSASMNQNIVTESVKVETNQVYLPEGEKSFDITSMTTTLPFYAGWDESLKKFVVTNRLLSRRDAGLSVNNNPQEINFTNPPIQGLNEGSFLYWQTEMPFNSYNIDQFITTNQSFYAPLGWRRFEFRHSILKTWVNNTKAGNNNIKKKTLIISLKNLQPLKSSQQKQNQIKTKKLVARRIKKRYKLLKQMPNQLMYSPTGPLLTEVLPSHYISVFDQQYRLPRNRYLKRNPLKTLKKTTLLALMDSSKQTNGVNKEFTLRKRVKPRRKYHRKRFIKKDGLIFPRRTKFNTNTTLTGNALITNNVNSIEEDDLRWRPSSRTKQKRKDNTRSSAASKTKSNKRVKTNPLRLRQLRRREFQQVLKPLQRYIPQNGGFTWPGDYLRLEIVEMPKLKSINIKKTSLKQKINVQPVGIMPRKYLIEKHNIKVLKKKLSQAYSTQQLTKVVQEYKNLIQNSPPAI.

7 helical membrane passes run 31–51 (NYTE…EFFK), 53–73 (FFSF…PDIA), 106–126 (LVIF…ILPT), 157–177 (FLWL…WLSL), 212–232 (IFLL…PFIS), 254–274 (FLLI…SLLQ), and 307–327 (ILNF…IPYY). 2 disordered regions span residues 1418–1441 (SLKK…HQFS) and 1848–1883 (DLRW…KTNP). 2 stretches are compositionally biased toward basic residues: residues 1422–1441 (SQIK…HQFS) and 1853–1863 (PSSRTKQKRKD).

This sequence belongs to the ycf78 family.

It is found in the plastid. The protein resides in the chloroplast membrane. In terms of biological role, essential for cell growth. May be involved in binding chloroplast DNA to either the chloroplast envelope or the thylakoid membrane. This is an uncharacterized protein from Chlamydomonas reinhardtii (Chlamydomonas smithii).